We begin with the raw amino-acid sequence, 983 residues long: Next to BRCA1 gene 1 protein (983 aa).

The region spanning 4–86 (QVTLNVTFKN…NQLQMQVHEG (83 aa)) is the PB1 domain. At Ser-117 the chain carries Phosphoserine. Positions 126–149 (MKTTEEPTAEARSPVPCDTDKPQD) are disordered. The ZZ-type zinc-finger motif lies at 214–266 (SWHIACSHCQKRIVGVRYQCSLCPSYNICEDCEAGPYSHDTNHILLKFRRPVV). Zn(2+) is bound by residues Cys-219, Cys-222, Cys-233, Cys-236, Cys-242, Cys-245, His-252, and His-256. ATG8 family proteins-binding stretches follow at residues 544–638 (ASER…PASV) and 745–756 (ASSEDYIIILPE). Thr-588 is subject to Phosphothreonine. A phosphoserine mark is found at Ser-592 and Ser-598. The interval 611 to 645 (EESEGAGLKASPDSTVLTKRKAETPASVEETEEDL) is disordered. The segment at 768-813 (MYSSALSQPGLERGAEGEPGIESGQEPAEARERLPERESQPKEQSI) is disordered. The segment covering 795 to 808 (AEARERLPERESQP) has biased composition (basic and acidic residues). Position 855 is a phosphoserine (Ser-855). Positions 867–894 (DHVRGEPRGSTGLANSRQKSCDHSRHHN) are disordered. The UBA domain maps to 930–974 (SEDQTAALMAHLFEMGFCDRQLNLRLLRKHNHNILQVVTELLQVN).

Homooligomer and heterooligomer. Interacts with TRIM55. Interacts with titin/TTN. Interacts with RNF29, USP8, MAP1LC3A, MAP1LC3B, MAP1LC3C, GABARAP, GABARAPL1 and GABARAPL2. Binds to ubiquitin and ubiquitinated proteins. Interacts with SQSTM1. Interacts with TAX1BP1. Interacts with IRF3; this interaction mediates autophagic degradation of IRF3. Interacts with IL12A and IL12B. Phosphorylated by GSK3A; this phosphorylation inhibits NBR1 involvement in the formation of ubiquitinated protein aggregates.

It is found in the cytoplasm. The protein resides in the cytoplasmic vesicle. It localises to the autophagosome. Its subcellular location is the lysosome. The protein localises to the myofibril. It is found in the sarcomere. The protein resides in the m line. In terms of biological role, ubiquitin-binding autophagy adapter that participates in different processes including host defense or intracellular homeostasis. Possesses a double function during the selective autophagy by acting as a shuttle bringing ubiquitinated proteins to autophagosomes and also by participating in the formation of protein aggregates. Plays a role in the regulation of the innate immune response by modulating type I interferon production and targeting ubiquitinated IRF3 for autophagic degradation. In response to oxidative stress, promotes an increase in SQSTM1 levels, phosphorylation, and body formation by preventing its autophagic degradation. In turn, activates the KEAP1-NRF2/NFE2L2 antioxidant pathway. Also plays non-autophagy role by mediating the shuttle of IL-12 to late endosome for subsequent secretion. The chain is Next to BRCA1 gene 1 protein (Nbr1) from Rattus norvegicus (Rat).